The sequence spans 1009 residues: Rho GTPase-activating protein gacT (1009 aa).

Disordered stretches follow at residues 1–72 (MKNI…SRNH) and 89–117 (TSHH…QQTQ). Positions 12-23 (FHKDKKEGDKQD) are enriched in basic and acidic residues. Positions 26 to 35 (GSSGSSGNSG) are enriched in low complexity. Over residues 58–69 (ESYSGDNSPTLS) the composition is skewed to polar residues. Residues 89 to 103 (TSHHSHSHNHNHNHN) show a composition bias toward basic residues. The span at 104–117 (HQLTQPIQQQQQTQ) shows a compositional bias: low complexity. The region spanning 163-351 (VPLTQVPCRA…EVFPQHHLYY (189 aa)) is the Rho-GAP domain. 3 disordered regions span residues 388-420 (TISG…DSTA), 432-482 (PEQQ…TFRV), and 508-571 (GPSG…TTDQ). Composition is skewed to low complexity over residues 394 to 415 (PSNG…ITSP), 432 to 468 (PEQQ…QPIS), and 512 to 521 (TTGTTPNGGS). The span at 522 to 546 (LSIGGGNGGNGGSSLSVGSGGGNGG) shows a compositional bias: gly residues. The segment covering 547-557 (SSLSVGSNTSV) has biased composition (low complexity). The stretch at 580–656 (AYTNNEDTKA…IEREIEKKRL (77 aa)) forms a coiled coil. The interval 686–713 (ISTIDGSGGSNRNSKNYGNGSSSSSNRR) is disordered. Positions 695 to 713 (SNRNSKNYGNGSSSSSNRR) are enriched in low complexity. Residues 715–743 (SNTINQQLQMQLQQLQIQQQQYQQTQQSQ) are a coiled coil. The disordered stretch occupies residues 759–781 (TTTTTTTSSGSNRFSSNRYKPVD). Positions 766–781 (SSGSNRFSSNRYKPVD) are enriched in polar residues. The stretch at 839-952 (ENLVLLQQQY…IEEIHLLETY (114 aa)) forms a coiled coil. A disordered region spans residues 965–1009 (STTKDLLTRSRSPTLPSSINMSTSSLGSSSSSAYNNNNNNNNVPK). The segment covering 967–980 (TKDLLTRSRSPTLP) has biased composition (polar residues). The segment covering 981–1009 (SSINMSTSSLGSSSSSAYNNNNNNNNVPK) has biased composition (low complexity).

The protein resides in the cytoplasm. Functionally, rho GTPase-activating protein involved in the signal transduction pathway. The polypeptide is Rho GTPase-activating protein gacT (gacT) (Dictyostelium discoideum (Social amoeba)).